Here is a 71-residue protein sequence, read N- to C-terminus: Large ribosomal subunit protein bL31 (71 aa).

The Zn(2+) site is built by cysteine 16, cysteine 18, cysteine 36, and cysteine 39.

Belongs to the bacterial ribosomal protein bL31 family. Type A subfamily. Part of the 50S ribosomal subunit. Zn(2+) is required as a cofactor.

In terms of biological role, binds the 23S rRNA. This Pseudothermotoga lettingae (strain ATCC BAA-301 / DSM 14385 / NBRC 107922 / TMO) (Thermotoga lettingae) protein is Large ribosomal subunit protein bL31.